The primary structure comprises 514 residues: MATNNANYRIKTIKDGCTAEELFRGDGLTYNDFIILPGFIDFGAADVNISGQFTKRIRLHIPIVSSPMDTITENEMAKTMALMGGVGVLHNNCTVERQVEMVKSVKAYRNGFISKPKSVPPNTPISNIIRIKEEKGISGILVTENGDPHGKLLGIVCTKDIDYVKNKDTPVSAVMTRREKMTVERAPIQLEEAMDVLNRSRYGYLPIVNENDEVVNLCSRRDAVRARDYPHSTLDKSGRLICAAATSTRPEDKRRVAALADVGVDVLVLDSSQGNTIYQIAFIKWVKSTYPHLEVVAGNVVTQDQAKNLIDAGADGIRIGMGSGSICITQEVLACGRPQGTAVYKVAQYCASRGVPCTADGGLRQVGDICKALAIGANCAMLGGMLSGTTETPGEYFFKGGVRLKVYRGMGSLEAMSQGKESGKRYLSENEAVQVAQGVSGNVVDKGSAAKLIAYVSKGLQQSAQDIGEISFDAIREKMYAGQVLFSRRSPTAQGEGGVHSLHSYEKKLFAAKM.

CBS domains lie at 112 to 171 (FISK…DTPV) and 175 to 233 (MTRR…PHST). NAD(+)-binding positions include 270–272 (DSS) and 320–322 (GMG). K(+) is bound by residues G322 and G324. S325 provides a ligand contact to IMP. C327 is a binding site for K(+). Residue C327 is the Thioimidate intermediate of the active site. Residues 360-362 (DGG), 383-384 (GG), and 407-411 (YRGMG) contribute to the IMP site. Catalysis depends on R425, which acts as the Proton acceptor. Q437 is an IMP binding site. The K(+) site is built by E496, G497, and G498. The Microbody targeting signal signature appears at 512-514 (AKM).

The protein belongs to the IMPDH/GMPR family. As to quaternary structure, heterotetramer. Interacts with glycosomal protein sorting receptor PEX5. The cofactor is K(+).

It is found in the glycosome. The catalysed reaction is IMP + NAD(+) + H2O = XMP + NADH + H(+). It participates in purine metabolism; XMP biosynthesis via de novo pathway; XMP from IMP: step 1/1. With respect to regulation, mycophenolic acid (MPA) is a non-competitive inhibitor that prevents formation of the closed enzyme conformation by binding to the same site as the amobile flap. In contrast, mizoribine monophosphate (MZP) is a competitive inhibitor that induces the closed conformation. MPA is a potent inhibitor of mammalian IMPDHs but a poor inhibitor of the bacterial enzymes. MZP is a more potent inhibitor of bacterial IMPDH. Potently inhibited by MPA. Inhibited by XMP and GMP. Functionally, catalyzes the conversion of inosine 5'-phosphate (IMP) to xanthosine 5'-phosphate (XMP), the first committed and rate-limiting step in the de novo synthesis of guanine nucleotides, and therefore plays an important role in the regulation of cell growth. The protein is Inosine-5'-monophosphate dehydrogenase of Leishmania donovani.